A 161-amino-acid polypeptide reads, in one-letter code: Protein-export protein SecB (161 aa).

It belongs to the SecB family. Homotetramer, a dimer of dimers. One homotetramer interacts with 1 SecA dimer.

The protein resides in the cytoplasm. Its function is as follows. One of the proteins required for the normal export of preproteins out of the cell cytoplasm. It is a molecular chaperone that binds to a subset of precursor proteins, maintaining them in a translocation-competent state. It also specifically binds to its receptor SecA. This is Protein-export protein SecB from Bradyrhizobium diazoefficiens (strain JCM 10833 / BCRC 13528 / IAM 13628 / NBRC 14792 / USDA 110).